The sequence spans 166 residues: Xanthine-guanine phosphoribosyltransferase (166 aa).

Residues 42–43 and 99–107 each bind 5-phospho-alpha-D-ribose 1-diphosphate; these read RG and DDLTDTGKT. Asp-100 contacts Mg(2+). Guanine is bound by residues Asp-103 and Ile-146. Positions 103 and 146 each coordinate xanthine. GMP contacts are provided by residues 103-107 and 145-146; these read DTGKT and WI.

This sequence belongs to the purine/pyrimidine phosphoribosyltransferase family. XGPT subfamily. As to quaternary structure, homotetramer. Mg(2+) is required as a cofactor.

It localises to the cell inner membrane. It carries out the reaction GMP + diphosphate = guanine + 5-phospho-alpha-D-ribose 1-diphosphate. The enzyme catalyses XMP + diphosphate = xanthine + 5-phospho-alpha-D-ribose 1-diphosphate. It catalyses the reaction IMP + diphosphate = hypoxanthine + 5-phospho-alpha-D-ribose 1-diphosphate. Its pathway is purine metabolism; GMP biosynthesis via salvage pathway; GMP from guanine: step 1/1. It participates in purine metabolism; XMP biosynthesis via salvage pathway; XMP from xanthine: step 1/1. In terms of biological role, purine salvage pathway enzyme that catalyzes the transfer of the ribosyl-5-phosphate group from 5-phospho-alpha-D-ribose 1-diphosphate (PRPP) to the N9 position of the 6-oxopurines guanine and xanthine to form the corresponding ribonucleotides GMP (guanosine 5'-monophosphate) and XMP (xanthosine 5'-monophosphate), with the release of PPi. To a lesser extent, also acts on hypoxanthine. This chain is Xanthine-guanine phosphoribosyltransferase, found in Mesorhizobium japonicum (strain LMG 29417 / CECT 9101 / MAFF 303099) (Mesorhizobium loti (strain MAFF 303099)).